The primary structure comprises 1192 residues: Outer capsid protein VP2 (1192 aa).

Positions 1112–1192 (IDQFMLDDMP…QSVAKPGIVR (81 aa)) are disordered. The span at 1140 to 1150 (PSAAANTEAST) shows a compositional bias: low complexity. The span at 1159 to 1183 (NVVSPTVPGQPSQTPVNPNQSTELQ) shows a compositional bias: polar residues.

The protein resides in the virion. It catalyses the reaction a 5'-end diphospho-ribonucleoside in mRNA + GTP + H(+) = a 5'-end (5'-triphosphoguanosine)-ribonucleoside in mRNA + diphosphate. The catalysed reaction is a 5'-end (5'-triphosphoguanosine)-ribonucleoside in mRNA + S-adenosyl-L-methionine = a 5'-end (N(7)-methyl 5'-triphosphoguanosine)-ribonucleoside in mRNA + S-adenosyl-L-homocysteine. Functionally, outer capsid protein involved in mRNA capping. Catalyzes the last 3 enzymatic activities for formation of the 5' cap structure on the viral plus-strand transcripts, namely the RNA guanylyltransferase, RNA-7N- and RNA-2'O-methyltransferase activities. The protein is Outer capsid protein VP2 (S2) of Rice ragged stunt virus (isolate Thailand) (RRSV).